The following is a 1435-amino-acid chain: Trafficking protein particle complex subunit 8 (1435 aa).

Phosphoserine occurs at positions 273, 279, and 309. The segment at 301 to 321 (QLEQSSDPSNSIDGPDHLRSA) is disordered. Residues 302 to 312 (LEQSSDPSNSI) show a composition bias toward polar residues.

The protein belongs to the TRS85 family. Component of the multisubunit TRAPP (transport protein particle) complex, which includes TRAPPC2, TRAPPC2L, TRAPPC3, TRAPPC3L, TRAPPC4, TRAPPC5, TRAPPC8, TRAPPC9, TRAPPC10, TRAPPC11 and TRAPPC12. Interacts with TBC1D14. Interacts (via C-terminus) with TMEM131 (via C-terminus); the interaction is direct and is involved in collagen secretion.

The protein resides in the golgi apparatus. It localises to the cis-Golgi network. Functionally, plays a role in endoplasmic reticulum to Golgi apparatus trafficking at a very early stage. Maintains together with TBC1D14 the cycling pool of ATG9 required for initiation of autophagy. Involved in collagen secretion. The polypeptide is Trafficking protein particle complex subunit 8 (TRAPPC8) (Homo sapiens (Human)).